The sequence spans 208 residues: Probable GTP-binding protein EngB (208 aa).

One can recognise an EngB-type G domain in the interval Glu-29–Ile-203. GTP-binding positions include Gly-37–Ser-44, Gly-64–Leu-68, Asp-82–Gly-85, Thr-149–Asp-152, and Phe-182–Ala-184. Mg(2+) contacts are provided by Ser-44 and Thr-66.

The protein belongs to the TRAFAC class TrmE-Era-EngA-EngB-Septin-like GTPase superfamily. EngB GTPase family. Mg(2+) is required as a cofactor.

Necessary for normal cell division and for the maintenance of normal septation. The chain is Probable GTP-binding protein EngB from Alcanivorax borkumensis (strain ATCC 700651 / DSM 11573 / NCIMB 13689 / SK2).